The sequence spans 1242 residues: von Willebrand factor A domain-containing protein 5B2 (1242 aa).

Positions 1–138 (MPGLYCPSSW…TMTVTLHSSR (138 aa)) constitute a VIT domain. In terms of domain architecture, VWFA spans 354–527 (ELLFLLDSSS…KALEPALSDI (174 aa)). Disordered stretches follow at residues 569 to 650 (SRPP…SDTA), 670 to 726 (CSAS…CPLP), 751 to 794 (LAGR…GQGL), 957 to 976 (CSSEPAEPPGTPPASHSHLD), 987 to 1055 (KGLQ…GSDH), and 1118 to 1159 (QGDS…GLGG). A compositionally biased stretch (low complexity) spans 588–604 (PSPEEAPSAASPGTEPT). Over residues 605 to 619 (GTSEPLGTGTVSAEL) the composition is skewed to polar residues. Positions 681–700 (TGSSESPGSQGPGSPEGSAP) are enriched in low complexity. The span at 1125-1138 (SCSPSPSSGSEGPG) shows a compositional bias: low complexity.

In Homo sapiens (Human), this protein is von Willebrand factor A domain-containing protein 5B2 (VWA5B2).